We begin with the raw amino-acid sequence, 734 residues long: Photosystem I P700 chlorophyll a apoprotein A2 (734 aa).

Helical transmembrane passes span 46–69, 135–158, 175–199, 273–291, 330–353, 369–395, 417–439, and 517–535; these read IFASHFGQLAIIFLWTSGNLFHVA, LYTGALFLLFLSAISLIAGWLHLQ, LNHHLSGLFGVSSLAWTGHLVHVAI, MAHHHLAIAFIFLVAGHMY, LHFQLGLALASLGVITSLVAQHMY, AALYTHHQYIAGFIMTGAFAHGAIFFI, AIISHLSWASLFLGFHTLGLYVH, and FLVHHAIALGLHTTTLILV. Residues Cys-559 and Cys-568 each coordinate [4Fe-4S] cluster. 2 consecutive transmembrane segments (helical) span residues 575–596 and 643–665; these read AFYLAVFWMLNTIGWVTFYWHW and LSVWAWMFLFGHLVWATGFMFLI. Residues His-654, Met-662, and Tyr-670 each coordinate chlorophyll a. A phylloquinone-binding site is contributed by Trp-671. A helical membrane pass occupies residues 707–727; the sequence is LVGLAHFSVGYIFTYAAFLIA.

This sequence belongs to the PsaA/PsaB family. As to quaternary structure, the PsaA/B heterodimer binds the P700 chlorophyll special pair and subsequent electron acceptors. PSI consists of a core antenna complex that captures photons, and an electron transfer chain that converts photonic excitation into a charge separation. The eukaryotic PSI reaction center is composed of at least 11 subunits. P700 is a chlorophyll a/chlorophyll a' dimer, A0 is one or more chlorophyll a, A1 is one or both phylloquinones and FX is a shared 4Fe-4S iron-sulfur center. is required as a cofactor.

The protein resides in the plastid. It is found in the chloroplast thylakoid membrane. It carries out the reaction reduced [plastocyanin] + hnu + oxidized [2Fe-2S]-[ferredoxin] = oxidized [plastocyanin] + reduced [2Fe-2S]-[ferredoxin]. In terms of biological role, psaA and PsaB bind P700, the primary electron donor of photosystem I (PSI), as well as the electron acceptors A0, A1 and FX. PSI is a plastocyanin-ferredoxin oxidoreductase, converting photonic excitation into a charge separation, which transfers an electron from the donor P700 chlorophyll pair to the spectroscopically characterized acceptors A0, A1, FX, FA and FB in turn. Oxidized P700 is reduced on the lumenal side of the thylakoid membrane by plastocyanin. The protein is Photosystem I P700 chlorophyll a apoprotein A2 of Solanum tuberosum (Potato).